The chain runs to 476 residues: H2.0-like homeobox protein (476 aa).

Disordered stretches follow at residues 120-169 (QHLP…PSSK), 328-401 (WRHS…HQTT), and 413-476 (TASS…LAGL). 2 stretches are compositionally biased toward low complexity: residues 123 to 134 (PQQSPTQQQQPQ) and 158 to 168 (HHSGSAPAPSS). Positions 273 to 332 (RSWSRAVFSNLQRKGLEKRFEIQKYVTKPDRKQLAAMLGLTDAQVKVWFQNRRMKWRHSK) form a DNA-binding region, homeobox. 2 stretches are compositionally biased toward basic and acidic residues: residues 331-346 (SKEA…EAGE) and 355-368 (EGER…RSEG). Acidic residues predominate over residues 369–379 (EAESESSDSES). Basic and acidic residues predominate over residues 386–397 (DTERTEGTERSL). The span at 413-434 (TASSSTSGSSFSFSSTSSLGSG) shows a compositional bias: low complexity. 2 stretches are compositionally biased toward polar residues: residues 435–446 (NTHVGSASSLGG) and 455–467 (HQPS…QSPE).

This sequence belongs to the H2.0 homeobox family. As to expression, expressed in Th1 cells, CD8-positive T-cells, B-cells and NK cells.

It localises to the nucleus. Functionally, transcription factor required for TBX21/T-bet-dependent maturation of Th1 cells as well as maintenance of Th1-specific gene expression. Involved in embryogenesis and hematopoiesis. The protein is H2.0-like homeobox protein (Hlx) of Mus musculus (Mouse).